A 760-amino-acid polypeptide reads, in one-letter code: Elongation factor G, mitochondrial (760 aa).

The N-terminal 37 residues, 1–37 (MIRGMLPRGLRALRPSVSPTVVSSSLHRNFHSSIRRF), are a transit peptide targeting the mitochondrion. The tr-type G domain occupies 68–349 (SRLRNIGVSA…AVVDYLPQPN (282 aa)). GTP is bound by residues 77-84 (AHIDSGKT), 148-152 (DTPGH), and 202-205 (NKMD).

The protein belongs to the TRAFAC class translation factor GTPase superfamily. Classic translation factor GTPase family. EF-G/EF-2 subfamily.

Its subcellular location is the mitochondrion. The protein operates within protein biosynthesis; polypeptide chain elongation. In terms of biological role, mitochondrial GTPase that catalyzes the GTP-dependent ribosomal translocation step during translation elongation. During this step, the ribosome changes from the pre-translocational (PRE) to the post-translocational (POST) state as the newly formed A-site-bound peptidyl-tRNA and P-site-bound deacylated tRNA move to the P and E sites, respectively. Catalyzes the coordinated movement of the two tRNA molecules, the mRNA and conformational changes in the ribosome. This chain is Elongation factor G, mitochondrial, found in Meyerozyma guilliermondii (strain ATCC 6260 / CBS 566 / DSM 6381 / JCM 1539 / NBRC 10279 / NRRL Y-324) (Yeast).